A 128-amino-acid chain; its full sequence is Large ribosomal subunit protein bL17 (128 aa).

It belongs to the bacterial ribosomal protein bL17 family. As to quaternary structure, part of the 50S ribosomal subunit. Contacts protein L32.

This is Large ribosomal subunit protein bL17 from Streptococcus mutans serotype c (strain ATCC 700610 / UA159).